A 413-amino-acid polypeptide reads, in one-letter code: E3 ubiquitin-protein ligase makorin (413 aa).

2 C3H1-type zinc fingers span residues 2–29 and 30–57; these read PRHE…HDVA and TRNE…HTRP. Residues 61–85 are disordered; the sequence is ELPSCSTPQTSQNQQNLQNSGQRVR. Positions 66–82 are enriched in low complexity; it reads STPQTSQNQQNLQNSGQ. The segment at 138–167 adopts a C3H1-type 3 zinc-finger fold; sequence QAQLMMCPYHQKSGDCNRQDMDCPFAHGNY. The segment at 213–267 adopts an RING-type zinc-finger fold; sequence CGICMENIFEKNLRFGILNGCQHCFCLDCIRQWRSKDQENVELATKTVRSCPECR. Residues 296–327 form a C3H1-type 4 zinc finger; it reads NTKRKICKYYSNERSRGACPFGNKCFYKHQLP.

In terms of assembly, component of a complex at least containing lep-2, lin-28 and the long non-coding RNA lep-5, which mediates the degradation of lin-28. As to expression, expressed in seam, tail tip, and other hypodermal cells, head and tail neurons, the pharynx, intestine and the developing hermaphrodite somatic gonad. Not expressed in body wall muscle cells.

It localises to the cytoplasm. The catalysed reaction is S-ubiquitinyl-[E2 ubiquitin-conjugating enzyme]-L-cysteine + [acceptor protein]-L-lysine = [E2 ubiquitin-conjugating enzyme]-L-cysteine + N(6)-ubiquitinyl-[acceptor protein]-L-lysine.. Its pathway is protein modification; protein ubiquitination. E3 ubiquitin ligase which catalyzes the covalent attachment of ubiquitin moieties onto substrate proteins. Promotes the larval to adult transition by binding to the long non-coding RNA lep-5 to target the heterochronic protein lin-28 for degradation by the proteasome. This association and degradation of lin-28 also controls the timing of the sexual differentiation of individual neurons in males including the AIM, AWA, ADF, ASJ and CEM neurons. Plays a role in governing the developmental timing of male tail tip morphogenesis. Plays a role in two aspects of male mating behavior: response to hermaphrodite contact and vulva location. May play a role in the detection of preferred food sources. The protein is E3 ubiquitin-protein ligase makorin of Caenorhabditis elegans.